The sequence spans 159 residues: Putative 4-hydroxy-4-methyl-2-oxoglutarate aldolase (159 aa).

Residues 78 to 81 and Arg100 contribute to the substrate site; that span reads GDVI. An a divalent metal cation-binding site is contributed by Asp101.

This sequence belongs to the class II aldolase/RraA-like family. In terms of assembly, homotrimer. The cofactor is a divalent metal cation.

It carries out the reaction 4-hydroxy-4-methyl-2-oxoglutarate = 2 pyruvate. It catalyses the reaction oxaloacetate + H(+) = pyruvate + CO2. In terms of biological role, catalyzes the aldol cleavage of 4-hydroxy-4-methyl-2-oxoglutarate (HMG) into 2 molecules of pyruvate. Also contains a secondary oxaloacetate (OAA) decarboxylase activity due to the common pyruvate enolate transition state formed following C-C bond cleavage in the retro-aldol and decarboxylation reactions. The chain is Putative 4-hydroxy-4-methyl-2-oxoglutarate aldolase from Mycobacterium sp. (strain JLS).